A 250-amino-acid chain; its full sequence is MSTNMREMLEAGVHFGHQTRFWDPKMAPYIFGHRNRIHIINLEKSLPMFQEAMKFAKQLTANRGTILMVGTKRTARETVAAEAQRAGIPYVDQRWLGGMLTNFKTVKTSIKRLKEMKAQQEAGLDSISKKEQLTFKREIEKLEKDIGGIQDMTALPDAIFVIDVGFHKIAILEAKKLGIPLIGVVDTNHSPLGIDYVIPGNDDSSKAVALYARGIADAVIEGRASAMDDVVKAVSAEGSDEFVEVENAAA.

Belongs to the universal ribosomal protein uS2 family.

The polypeptide is Small ribosomal subunit protein uS2 (Polaromonas naphthalenivorans (strain CJ2)).